The chain runs to 590 residues: Aspartate--tRNA(Asp/Asn) ligase (590 aa).

Glu175 provides a ligand contact to L-aspartate. Residues 199-202 (QQFK) form an aspartate region. 2 residues coordinate L-aspartate: Arg221 and His452. 221–223 (RDE) contacts ATP. Glu485 serves as a coordination point for ATP. Arg492 lines the L-aspartate pocket. Residue 537 to 540 (GIDR) coordinates ATP.

Belongs to the class-II aminoacyl-tRNA synthetase family. Type 1 subfamily. As to quaternary structure, homodimer.

It is found in the cytoplasm. The catalysed reaction is tRNA(Asx) + L-aspartate + ATP = L-aspartyl-tRNA(Asx) + AMP + diphosphate. Aspartyl-tRNA synthetase with relaxed tRNA specificity since it is able to aspartylate not only its cognate tRNA(Asp) but also tRNA(Asn). Reaction proceeds in two steps: L-aspartate is first activated by ATP to form Asp-AMP and then transferred to the acceptor end of tRNA(Asp/Asn). The chain is Aspartate--tRNA(Asp/Asn) ligase from Dinoroseobacter shibae (strain DSM 16493 / NCIMB 14021 / DFL 12).